The primary structure comprises 208 residues: Large ribosomal subunit protein bL25 (208 aa).

It belongs to the bacterial ribosomal protein bL25 family. CTC subfamily. Part of the 50S ribosomal subunit; part of the 5S rRNA/L5/L18/L25 subcomplex. Contacts the 5S rRNA. Binds to the 5S rRNA independently of L5 and L18.

In terms of biological role, this is one of the proteins that binds to the 5S RNA in the ribosome where it forms part of the central protuberance. This is Large ribosomal subunit protein bL25 from Bartonella quintana (strain Toulouse) (Rochalimaea quintana).